Here is a 307-residue protein sequence, read N- to C-terminus: Probable GTP 3',8-cyclase (307 aa).

The region spanning 4–222 (ALGREVRSVR…RTFHSREVYR (219 aa)) is the Radical SAM core domain. Arginine 13 lines the GTP pocket. Residues cysteine 20 and cysteine 24 each contribute to the [4Fe-4S] cluster site. Tyrosine 26 is an S-adenosyl-L-methionine binding site. Cysteine 27 contacts [4Fe-4S] cluster. Residue lysine 60 participates in GTP binding. Glycine 64 and serine 112 together coordinate S-adenosyl-L-methionine. Lysine 150 lines the GTP pocket. [4Fe-4S] cluster contacts are provided by cysteine 240 and cysteine 243. 245–247 (RIR) contributes to the GTP binding site. [4Fe-4S] cluster is bound at residue cysteine 257.

Belongs to the radical SAM superfamily. MoaA family. The cofactor is [4Fe-4S] cluster.

It carries out the reaction GTP + AH2 + S-adenosyl-L-methionine = (8S)-3',8-cyclo-7,8-dihydroguanosine 5'-triphosphate + 5'-deoxyadenosine + L-methionine + A + H(+). Its pathway is cofactor biosynthesis; molybdopterin biosynthesis. In terms of biological role, catalyzes the cyclization of GTP to (8S)-3',8-cyclo-7,8-dihydroguanosine 5'-triphosphate. The protein is Probable GTP 3',8-cyclase of Methanopyrus kandleri (strain AV19 / DSM 6324 / JCM 9639 / NBRC 100938).